A 611-amino-acid polypeptide reads, in one-letter code: tRNA uridine 5-carboxymethylaminomethyl modification enzyme MnmG (611 aa).

FAD contacts are provided by residues 12-17 (GGGHAG), V124, and S179. 271-285 (GPRYCPSVEDKIVRF) serves as a coordination point for NAD(+). Q368 provides a ligand contact to FAD.

Belongs to the MnmG family. Homodimer. Heterotetramer of two MnmE and two MnmG subunits. Requires FAD as cofactor.

The protein localises to the cytoplasm. Its function is as follows. NAD-binding protein involved in the addition of a carboxymethylaminomethyl (cmnm) group at the wobble position (U34) of certain tRNAs, forming tRNA-cmnm(5)s(2)U34. The chain is tRNA uridine 5-carboxymethylaminomethyl modification enzyme MnmG from Mycoplasma mobile (strain ATCC 43663 / 163K / NCTC 11711) (Mesomycoplasma mobile).